We begin with the raw amino-acid sequence, 270 residues long: tRNA pseudouridine synthase A (270 aa).

Residue Asp-60 is the Nucleophile of the active site. Tyr-118 contributes to the substrate binding site.

It belongs to the tRNA pseudouridine synthase TruA family. As to quaternary structure, homodimer.

It carries out the reaction uridine(38/39/40) in tRNA = pseudouridine(38/39/40) in tRNA. Formation of pseudouridine at positions 38, 39 and 40 in the anticodon stem and loop of transfer RNAs. This is tRNA pseudouridine synthase A from Cronobacter sakazakii (strain ATCC BAA-894) (Enterobacter sakazakii).